The primary structure comprises 148 residues: SsrA-binding protein (148 aa).

Belongs to the SmpB family.

Its subcellular location is the cytoplasm. Functionally, required for rescue of stalled ribosomes mediated by trans-translation. Binds to transfer-messenger RNA (tmRNA), required for stable association of tmRNA with ribosomes. tmRNA and SmpB together mimic tRNA shape, replacing the anticodon stem-loop with SmpB. tmRNA is encoded by the ssrA gene; the 2 termini fold to resemble tRNA(Ala) and it encodes a 'tag peptide', a short internal open reading frame. During trans-translation Ala-aminoacylated tmRNA acts like a tRNA, entering the A-site of stalled ribosomes, displacing the stalled mRNA. The ribosome then switches to translate the ORF on the tmRNA; the nascent peptide is terminated with the 'tag peptide' encoded by the tmRNA and targeted for degradation. The ribosome is freed to recommence translation, which seems to be the essential function of trans-translation. The chain is SsrA-binding protein from Ehrlichia ruminantium (strain Gardel).